The primary structure comprises 320 residues: Beta-ketoacyl-[acyl-carrier-protein] synthase III (320 aa).

Catalysis depends on residues Cys-114 and His-247. The segment at 248–252 (QANRR) is ACP-binding. Asn-277 is a catalytic residue.

It belongs to the thiolase-like superfamily. FabH family. Homodimer.

It localises to the cytoplasm. The catalysed reaction is malonyl-[ACP] + acetyl-CoA + H(+) = 3-oxobutanoyl-[ACP] + CO2 + CoA. It participates in lipid metabolism; fatty acid biosynthesis. Its function is as follows. Catalyzes the condensation reaction of fatty acid synthesis by the addition to an acyl acceptor of two carbons from malonyl-ACP. Catalyzes the first condensation reaction which initiates fatty acid synthesis and may therefore play a role in governing the total rate of fatty acid production. Possesses both acetoacetyl-ACP synthase and acetyl transacylase activities. Its substrate specificity determines the biosynthesis of branched-chain and/or straight-chain of fatty acids. The chain is Beta-ketoacyl-[acyl-carrier-protein] synthase III from Neisseria gonorrhoeae (strain ATCC 700825 / FA 1090).